A 423-amino-acid polypeptide reads, in one-letter code: COP9 signalosome complex subunit 3 (423 aa).

A2 carries the post-translational modification N-acetylalanine. In terms of domain architecture, PCI spans 197–365 (NFERALYFYE…GMVSFHDNPE (169 aa)). The disordered stretch occupies residues 402–423 (QFVQKSMGSQEDDSGNKPSSYS). S407, S410, and S423 each carry phosphoserine.

It belongs to the CSN3 family. Component of the CSN complex, composed of COPS1/GPS1, COPS2, COPS3, COPS4, COPS5, COPS6, COPS7 (COPS7A or COPS7B), COPS8 and COPS9. In the complex, it probably interacts directly with COPS1, COPS4, COPS8 and COPS9. Interacts with CK2 and PKD. Interacts with the translation initiation factor EIF3S6 and IKBKG. Interacts with ERCC6. Widely expressed.

It is found in the cytoplasm. Its subcellular location is the nucleus. In terms of biological role, component of the COP9 signalosome complex (CSN), a complex involved in various cellular and developmental processes. The CSN complex is an essential regulator of the ubiquitin (Ubl) conjugation pathway by mediating the deneddylation of the cullin subunits of SCF-type E3 ligase complexes, leading to decrease the Ubl ligase activity of SCF-type complexes such as SCF, CSA or DDB2. The complex is also involved in phosphorylation of p53/TP53, c-jun/JUN, IkappaBalpha/NFKBIA, ITPK1 and IRF8/ICSBP, possibly via its association with CK2 and PKD kinases. CSN-dependent phosphorylation of TP53 and JUN promotes and protects degradation by the Ubl system, respectively. Essential to maintain the survival of epiblast cells and thus the development of the postimplantation embryo. This is COP9 signalosome complex subunit 3 (Cops3) from Mus musculus (Mouse).